The primary structure comprises 347 residues: Spermidine/putrescine import ATP-binding protein PotA (347 aa).

The region spanning 6–236 (IEIKNVYKEF…PKNAFVAKFI (231 aa)) is the ABC transporter domain. ATP is bound at residue 38-45 (GPSGCGKT).

It belongs to the ABC transporter superfamily. Spermidine/putrescine importer (TC 3.A.1.11.1) family. In terms of assembly, the complex is composed of two ATP-binding proteins (PotA), two transmembrane proteins (PotB and PotC) and a solute-binding protein (PotD).

Its subcellular location is the cell membrane. It carries out the reaction ATP + H2O + polyamine-[polyamine-binding protein]Side 1 = ADP + phosphate + polyamineSide 2 + [polyamine-binding protein]Side 1.. Functionally, part of the ABC transporter complex PotABCD involved in spermidine/putrescine import. Responsible for energy coupling to the transport system. This chain is Spermidine/putrescine import ATP-binding protein PotA, found in Clostridium novyi (strain NT).